The primary structure comprises 130 residues: Large ribosomal subunit protein eL34 (130 aa).

Positions 111 to 130 are disordered; that stretch reads KPVSKPPKIQKTAKAASKSK.

Belongs to the eukaryotic ribosomal protein eL34 family.

The chain is Large ribosomal subunit protein eL34 (RpL34) from Aedes albopictus (Asian tiger mosquito).